The sequence spans 199 residues: Charged multivesicular body protein 1b (199 aa).

2 coiled-coil regions span residues 8–42 (LFNL…AIQK) and 178–199 (TSVA…RDQV). The disordered stretch occupies residues 167–199 (ELPQGQTGSVGTSVASTEQDELSQRLARLRDQV). Positions 170 to 183 (QGQTGSVGTSVAST) are enriched in polar residues. An MIT-interacting motif motif is present at residues 186–196 (DELSQRLARLR).

It belongs to the SNF7 family. As to quaternary structure, probable peripherally associated component of the endosomal sorting required for transport complex III (ESCRT-III).

It localises to the cytoplasm. The protein localises to the cytosol. It is found in the endosome. Its subcellular location is the late endosome membrane. Functionally, probable peripherally associated component of the endosomal sorting required for transport complex III (ESCRT-III) which is involved in multivesicular bodies (MVBs) formation and sorting of endosomal cargo proteins into MVBs. MVBs contain intraluminal vesicles (ILVs) that are generated by invagination and scission from the limiting membrane of the endosome and mostly are delivered to lysosomes enabling degradation of membrane proteins, such as stimulated growth factor receptors, lysosomal enzymes and lipids. The protein is Charged multivesicular body protein 1b (chmp1b) of Xenopus laevis (African clawed frog).